We begin with the raw amino-acid sequence, 233 residues long: Phytol kinase (233 aa).

6 consecutive transmembrane segments (helical) span residues 9-29 (MALP…AVVL), 56-76 (VVLI…AGVF), 96-118 (VGRH…GGFF), 122-144 (LPIF…ALVG), 172-192 (FLVT…VLVV), and 213-233 (NLTV…LWLG).

The protein belongs to the polyprenol kinase family.

The protein localises to the cell membrane. The catalysed reaction is phytol + CTP = phytyl phosphate + CDP + H(+). The protein operates within cofactor biosynthesis; tocopherol biosynthesis. Catalyzes the CTP-dependent phosphorylation of phytol to phytylmonophosphate (PMP). Can also use UTP as an alternative phosphate donor, but not ATP or GTP. Is involved in tocopherol biosynthesis, via the utilization of phytol generated by chlorophyll degradation. Also plays a significant but not critical role in the recycling of phytol for the biosynthesis of new chlorophyll molecules. This is Phytol kinase from Synechocystis sp. (strain ATCC 27184 / PCC 6803 / Kazusa).